The chain runs to 64 residues: OPG024 protein (64 aa).

Residues 1-64 are disordered; it reads MSSKGGSSGG…GGVKSGTGKI (64 aa). The span at 23–34 shows a compositional bias: low complexity; that stretch reads NKGSKTYTSSGS. The segment covering 49–64 has biased composition (gly residues); it reads VNGGVNGGVKSGTGKI.

The protein belongs to the orthopoxvirus OPG024 family.

The polypeptide is OPG024 protein (OPG023) (Cynomys gunnisoni (Gunnison's prairie dog)).